The primary structure comprises 257 residues: Large ribosomal subunit protein uL2 (257 aa).

Glycyl lysine isopeptide (Lys-Gly) (interchain with G-Cter in SUMO2) cross-links involve residues lysine 42 and lysine 149. The disordered stretch occupies residues 207–232 (VEHPFGGGNHQHIGKPSTIRRDAPAG). Position 216 is a (3S)-3-hydroxyhistidine (histidine 216). Residues lysine 234 and lysine 250 each participate in a glycyl lysine isopeptide (Lys-Gly) (interchain with G-Cter in SUMO2) cross-link.

The protein belongs to the universal ribosomal protein uL2 family. Component of the large ribosomal subunit. Interacts with CRY1. Hydroxylated on His-216 by RIOX1. The modification is impaired by hypoxia.

The protein resides in the cytoplasm. Component of the large ribosomal subunit. The ribosome is a large ribonucleoprotein complex responsible for the synthesis of proteins in the cell. This Bos taurus (Bovine) protein is Large ribosomal subunit protein uL2 (RPL8).